Reading from the N-terminus, the 357-residue chain is P2Y purinoceptor 8 (357 aa).

Topologically, residues 1 to 26 (MVKNGSHLDAETLAMLQNKAISITLP) are extracellular. N4 is a glycosylation site (N-linked (GlcNAc...) asparagine). The helical transmembrane segment at 27–47 (VVYTMVAIISIPGNFFSLWVL) threads the bilayer. At 48–56 (CWHIKPKTP) the chain is on the cytoplasmic side. A helical transmembrane segment spans residues 57-77 (SVIFMINLSITDLLLACCFPF). The Extracellular segment spans residues 78–97 (QIFYHIQRNHWIFGKTLCSL). C95 and C174 are oxidised to a cystine. A helical membrane pass occupies residues 98–118 (VTVMFYSNMYSSILTMTCISI). Residues 119-137 (ERYMGVVYPMKLIKWRRKR) lie on the Cytoplasmic side of the membrane. Residues 138-158 (YALGACVIMWIFLLLAFYPLE) traverse the membrane as a helical segment. Residues 159–185 (STDLTYEVKELGIITCFDVLKWEMLPN) lie on the Extracellular side of the membrane. Residues 186 to 206 (FAAWVAFLLTLFVVLFLIPFI) traverse the membrane as a helical segment. The Cytoplasmic segment spans residues 207–236 (VTVGCYIGTIRKLIQTSSRYGNKQKTRSIY). Residues 237-257 (LAIIVLSVFITCFAPNNFILL) form a helical membrane-spanning segment. The Extracellular segment spans residues 258–271 (AHMIVRLFYEGSLY). A helical membrane pass occupies residues 272–294 (PAYKLTLCLSCLNNCIDPFIYYF). Topologically, residues 295-357 (ASKEFYQKFM…ICLQRQESVF (63 aa)) are cytoplasmic.

This sequence belongs to the G-protein coupled receptor 1 family.

The protein localises to the cell membrane. In terms of biological role, probable receptor for purines coupled to G-proteins. This Gallus gallus (Chicken) protein is P2Y purinoceptor 8 (P2RY8).